The chain runs to 245 residues: Phycocyanobilin:ferredoxin oxidoreductase (245 aa).

The protein belongs to the HY2 family.

It catalyses the reaction (2R,3Z)-phycocyanobilin + 4 oxidized [2Fe-2S]-[ferredoxin] = biliverdin IXalpha + 4 reduced [2Fe-2S]-[ferredoxin] + 4 H(+). Functionally, catalyzes the four-electron reduction of biliverdin IX-alpha (2-electron reduction at both the A and D rings); the reaction proceeds via an isolatable 2-electron intermediate, 181,182-dihydrobiliverdin. The chain is Phycocyanobilin:ferredoxin oxidoreductase from Trichormus variabilis (strain ATCC 29413 / PCC 7937) (Anabaena variabilis).